Consider the following 151-residue polypeptide: Large ribosomal subunit protein bL9 (151 aa).

This sequence belongs to the bacterial ribosomal protein bL9 family.

Its function is as follows. Binds to the 23S rRNA. In Lactobacillus acidophilus (strain ATCC 700396 / NCK56 / N2 / NCFM), this protein is Large ribosomal subunit protein bL9.